A 269-amino-acid chain; its full sequence is NAD kinase (269 aa).

Asp45 serves as the catalytic Proton acceptor. NAD(+) contacts are provided by residues 45 to 46 (DG), 122 to 123 (NE), Arg149, Asp151, and Ala186.

This sequence belongs to the NAD kinase family. It depends on a divalent metal cation as a cofactor.

It localises to the cytoplasm. The catalysed reaction is NAD(+) + ATP = ADP + NADP(+) + H(+). Involved in the regulation of the intracellular balance of NAD and NADP, and is a key enzyme in the biosynthesis of NADP. Catalyzes specifically the phosphorylation on 2'-hydroxyl of the adenosine moiety of NAD to yield NADP. The polypeptide is NAD kinase (Staphylococcus haemolyticus (strain JCSC1435)).